The sequence spans 450 residues: Probable rhamnogalacturonase E (450 aa).

Positions 1–22 (MTWSTSFLSVHFFAFITTSIHA) are cleaved as a signal peptide. Cys-43 and Cys-69 are disulfide-bonded. 3 N-linked (GlcNAc...) asparagine glycosylation sites follow: Asn-54, Asn-92, and Asn-131. Residue Asp-222 is the Proton donor of the active site. Cys-224 and Cys-241 form a disulfide bridge. Residues Asn-242 and Asn-257 are each glycosylated (N-linked (GlcNAc...) asparagine). Residue His-297 is part of the active site. 2 N-linked (GlcNAc...) asparagine glycosylation sites follow: Asn-324 and Asn-329. 2 disulfides stabilise this stretch: Cys-347-Cys-353 and Cys-375-Cys-384.

This sequence belongs to the glycosyl hydrolase 28 family.

It localises to the secreted. In terms of biological role, pectinolytic enzymes consist of four classes of enzymes: pectine lyase, polygalacturonase, pectin methylesterase and rhamnogalacturonase. Hydrolyzes alpha-D-galacturonopyranosyl-(1,2)-alpha-L-rhamnopyranosyl linkages in the backbone of the hairy regions of pectins. This Aspergillus niger protein is Probable rhamnogalacturonase E (rhgE).